The following is a 71-amino-acid chain: UPF0435 protein SERP1418 (71 aa).

This sequence belongs to the UPF0435 family.

This chain is UPF0435 protein SERP1418, found in Staphylococcus epidermidis (strain ATCC 35984 / DSM 28319 / BCRC 17069 / CCUG 31568 / BM 3577 / RP62A).